Reading from the N-terminus, the 565-residue chain is Sulfite reductase [NADPH] hemoprotein beta-component (565 aa).

[4Fe-4S] cluster-binding residues include Cys429, Cys435, Cys474, and Cys478. Cys478 contacts siroheme.

It belongs to the nitrite and sulfite reductase 4Fe-4S domain family. As to quaternary structure, alpha(8)-beta(8). The alpha component is a flavoprotein, the beta component is a hemoprotein. Siroheme serves as cofactor. It depends on [4Fe-4S] cluster as a cofactor.

It carries out the reaction hydrogen sulfide + 3 NADP(+) + 3 H2O = sulfite + 3 NADPH + 4 H(+). It participates in sulfur metabolism; hydrogen sulfide biosynthesis; hydrogen sulfide from sulfite (NADPH route): step 1/1. In terms of biological role, component of the sulfite reductase complex that catalyzes the 6-electron reduction of sulfite to sulfide. This is one of several activities required for the biosynthesis of L-cysteine from sulfate. The chain is Sulfite reductase [NADPH] hemoprotein beta-component from Shewanella pealeana (strain ATCC 700345 / ANG-SQ1).